Consider the following 63-residue polypeptide: MPKMKSVKSAVKRFKVGKNKIKRGSAFRSHILTKKPAKRMRGLRTAKYVHSTNVKAVEKMLGI.

It belongs to the bacterial ribosomal protein bL35 family.

The chain is Large ribosomal subunit protein bL35 from Campylobacter jejuni subsp. jejuni serotype O:2 (strain ATCC 700819 / NCTC 11168).